Consider the following 347-residue polypeptide: UDP-N-acetylenolpyruvoylglucosamine reductase (347 aa).

Residues 15–187 (FGIEQTCSYL…TAIGLKLPKR (173 aa)) enclose the FAD-binding PCMH-type domain. R163 is a catalytic residue. S233 acts as the Proton donor in catalysis. E328 is a catalytic residue.

This sequence belongs to the MurB family. FAD is required as a cofactor.

The protein localises to the cytoplasm. It carries out the reaction UDP-N-acetyl-alpha-D-muramate + NADP(+) = UDP-N-acetyl-3-O-(1-carboxyvinyl)-alpha-D-glucosamine + NADPH + H(+). It functions in the pathway cell wall biogenesis; peptidoglycan biosynthesis. In terms of biological role, cell wall formation. In Vibrio parahaemolyticus serotype O3:K6 (strain RIMD 2210633), this protein is UDP-N-acetylenolpyruvoylglucosamine reductase.